Here is a 97-residue protein sequence, read N- to C-terminus: Vitelline membrane protein 15a-2 (97 aa).

The N-terminal stretch at 1–19 is a signal peptide; sequence MNKIIAALVLFTAVIGALA. Residues 20 to 23 form a required for binding to the gut receptor region; that stretch reads DYPA. The segment at 26–46 is disordered; that stretch reads PPPPKPYHAPPPPPYHAPPHH. In terms of domain architecture, VM spans 61–97; it reads KAPAAKCGANLLVGCAPSVAHVPCVPVHPHPPPPAHY.

Belongs to the vitelline membrane protein family. Expressed in the anterior region of the follicle cells.

It is found in the secreted. Has an oostatic activity. Inhibits trypsin biosynthesis in the midgut epithelial cells which indirectly reduces the vitellogenin concentration in the hemolymph resulting in inhibition of oocyte development. The polypeptide is Vitelline membrane protein 15a-2 (15a-2) (Aedes aegypti (Yellowfever mosquito)).